The following is a 221-amino-acid chain: Probable septum site-determining protein MinC (221 aa).

It belongs to the MinC family. As to quaternary structure, interacts with MinD and FtsZ.

In terms of biological role, cell division inhibitor that blocks the formation of polar Z ring septums. Rapidly oscillates between the poles of the cell to destabilize FtsZ filaments that have formed before they mature into polar Z rings. Prevents FtsZ polymerization. This is Probable septum site-determining protein MinC from Aliivibrio fischeri (strain MJ11) (Vibrio fischeri).